We begin with the raw amino-acid sequence, 131 residues long: Riboflavin kinase (131 aa).

11–16 (GLQKAG) serves as a coordination point for CDP. Thr-40 and Asn-42 together coordinate Mg(2+). The FMN site is built by Thr-98 and Glu-106. 111–114 (EKLR) contributes to the CDP binding site.

This sequence belongs to the archaeal riboflavin kinase family. It depends on Mg(2+) as a cofactor.

It catalyses the reaction riboflavin + CTP = CDP + FMN + H(+). The protein operates within cofactor biosynthesis; FMN biosynthesis; FMN from riboflavin (CTP route): step 1/1. Its function is as follows. Catalyzes the CTP-dependent phosphorylation of riboflavin (vitamin B2) to form flavin mononucleotide (FMN). The polypeptide is Riboflavin kinase (Methanosphaera stadtmanae (strain ATCC 43021 / DSM 3091 / JCM 11832 / MCB-3)).